Here is a 193-residue protein sequence, read N- to C-terminus: nitroreductase FRM2 (193 aa).

It belongs to the nitroreductase family. The cofactor is FMN.

The protein localises to the cytoplasm. The protein resides in the nucleus. It carries out the reaction 4-(hydroxyamino)quinoline N-oxide + 2 NAD(+) + H2O = 4-nitroquinoline N-oxide + 2 NADH + 2 H(+). Functionally, type II nitroreductase, able to reduce 4-nitroquinoline N-oxide (4-NQO) into 4-aminoquinoline-N-oxide (4-AQO) via 4-hydroxyaminoquinoline (4-HAQO), using NADH as reductant. involved in the oxidative stress response. Plays a possible role in the metal stress response. Involved in negative regulation of fatty acid metabolism. The sequence is that of nitroreductase FRM2 from Saccharomyces cerevisiae (strain ATCC 204508 / S288c) (Baker's yeast).